We begin with the raw amino-acid sequence, 258 residues long: F-box/LRR-repeat protein 25 (258 aa).

The F-box domain occupies Ser27–Leu76. 4 LRR repeats span residues Cys101–Phe130, Cys136–Pro161, Arg177–Phe202, and Arg224–Asp249.

The protein is F-box/LRR-repeat protein 25 (FBL25) of Arabidopsis thaliana (Mouse-ear cress).